Reading from the N-terminus, the 244-residue chain is MNIDLNADLGEGCASDSELLTLVSSANIACGFHAGDAQTMLTCVREALKNGVAIGAHPSFPDRDNFGRTAMALPPETVYAQTLYQIGALGAIVQAQGGVMRHVKPHGMLYNQAAKDPHLAQAIAKAVHDYDPSLILVGLAGSELIRAGERYRLVTRQEVFADRGYQADGSLVPRTQPGALIHDEEQALAQTLDMVQAGRVKSVTGVWTTVTAQTVCIHGDGEYALAFARRLRAAFNARNIHVIA.

This sequence belongs to the LamB/PxpA family. As to quaternary structure, forms a complex composed of PxpA, PxpB and PxpC.

The catalysed reaction is 5-oxo-L-proline + ATP + 2 H2O = L-glutamate + ADP + phosphate + H(+). Its function is as follows. Catalyzes the cleavage of 5-oxoproline to form L-glutamate coupled to the hydrolysis of ATP to ADP and inorganic phosphate. The chain is 5-oxoprolinase subunit A from Salmonella schwarzengrund (strain CVM19633).